Reading from the N-terminus, the 520-residue chain is Putative cytochrome P450 CYP13A5 (520 aa).

C464 serves as a coordination point for heme.

It belongs to the cytochrome P450 family. It depends on heme as a cofactor.

Its function is as follows. Cytochromes P450 are a group of heme-thiolate monooxygenases. They oxidize a variety of structurally unrelated compounds, including steroids, fatty acids, and xenobiotics. The chain is Putative cytochrome P450 CYP13A5 (cyp-13A5) from Caenorhabditis elegans.